A 324-amino-acid chain; its full sequence is Glutamyl-Q tRNA(Asp) synthetase (324 aa).

Residues Arg-5–Ser-9 and Glu-41 contribute to the L-glutamate site. The short motif at Pro-8–Asn-18 is the 'HIGH' region element. Zn(2+) contacts are provided by Cys-105, Cys-107, Tyr-128, and Cys-132. The L-glutamate site is built by Tyr-193 and Arg-211. A 'KMSKS' region motif is present at residues Arg-249–Arg-253. ATP is bound at residue Lys-252.

This sequence belongs to the class-I aminoacyl-tRNA synthetase family. GluQ subfamily. The cofactor is Zn(2+).

Its function is as follows. Catalyzes the tRNA-independent activation of glutamate in presence of ATP and the subsequent transfer of glutamate onto a tRNA(Asp). Glutamate is transferred on the 2-amino-5-(4,5-dihydroxy-2-cyclopenten-1-yl) moiety of the queuosine in the wobble position of the QUC anticodon. The sequence is that of Glutamyl-Q tRNA(Asp) synthetase from Nitratidesulfovibrio vulgaris (strain ATCC 29579 / DSM 644 / CCUG 34227 / NCIMB 8303 / VKM B-1760 / Hildenborough) (Desulfovibrio vulgaris).